The sequence spans 227 residues: Ribosomal RNA small subunit methyltransferase G (227 aa).

S-adenosyl-L-methionine is bound by residues Gly-69, Phe-74, 119 to 120 (VE), and Arg-134.

Belongs to the methyltransferase superfamily. RNA methyltransferase RsmG family.

The protein localises to the cytoplasm. In terms of biological role, specifically methylates the N7 position of a guanine in 16S rRNA. The sequence is that of Ribosomal RNA small subunit methyltransferase G from Mycoplasmopsis pulmonis (strain UAB CTIP) (Mycoplasma pulmonis).